The chain runs to 570 residues: Multidrug and toxin extrusion protein 1 (570 aa).

An N-acetylmethionine modification is found at methionine 1. The Cytoplasmic portion of the chain corresponds to 1-37 (MEAPEEPAPVRGGPEATLEVRGSRCLRLSAFREELRA). Residues 38–58 (LLVLAGPAFLVQLMVFLISFI) form a helical membrane-spanning segment. The Extracellular portion of the chain corresponds to 59 to 72 (SSVFCGHLGKLELD). A helical transmembrane segment spans residues 73-93 (AVTLAIAVINVTGVSVGFGLS). Residues 94–123 (SACDTLISQTYGSQNLKHVGVILQRSALVL) lie on the Cytoplasmic side of the membrane. The helical transmembrane segment at 124–144 (LLCCFPCWALFLNTQHILLLF) threads the bilayer. At 145–152 (RQDPDVSR) the chain is on the extracellular side. Residues 153–173 (LTQTYVTIFIPALPATFLYML) form a helical membrane-spanning segment. Residues 174 to 176 (QVK) lie on the Cytoplasmic side of the membrane. A helical transmembrane segment spans residues 177–197 (YLLNQGIVLPQIVTGVAANLV). Residues 198 to 216 (NALANYLFLHQLHLGVIGS) are Extracellular-facing. The chain crosses the membrane as a helical span at residues 217–237 (ALANLISQYTLALLLFLYILG). The Cytoplasmic portion of the chain corresponds to 238–256 (KKLHQATWGGWSLECLQDW). Residues 257–276 (ASFLRLAIPSMLMLCMEWWA) form a helical membrane-spanning segment. Topologically, residues 277–295 (YEVGSFLSGILGMVELGAQ) are extracellular. Residues 296 to 316 (SIVYELAIIVYMVPAGFSVAA) form a helical membrane-spanning segment. The Cytoplasmic segment spans residues 317–336 (SVRVGNALGAGDMEQARKSS). Residues 337 to 357 (TVSLLITVLFAVAFSVLLLSC) traverse the membrane as a helical segment. Residues 358–370 (KDHVGYIFTTDRD) lie on the Extracellular side of the membrane. The helical transmembrane segment at 371-391 (IINLVAQVVPIYAVSHLFEAL) threads the bilayer. Over 392–408 (ACTSGGVLRGSGNQKVG) the chain is Cytoplasmic. A helical membrane pass occupies residues 409 to 429 (AIVNTIGYYVVGLPIGIALMF). Over 430-437 (ATTLGVMG) the chain is Extracellular. A helical membrane pass occupies residues 438 to 458 (LWSGIIICTVFQAVCFLGFII). The Cytoplasmic portion of the chain corresponds to 459 to 546 (QLNWKKACQQ…LSRKQLVLRR (88 aa)). The segment at 508-534 (DVGKTGEPQSDQQMRQEEPLPEHPQDG) is disordered. The span at 521-533 (MRQEEPLPEHPQD) shows a compositional bias: basic and acidic residues. Residues 547-567 (GLLLLGVFLILLVGILVRFYV) traverse the membrane as a helical segment. The Extracellular portion of the chain corresponds to 568–570 (RIQ).

It belongs to the multi antimicrobial extrusion (MATE) (TC 2.A.66.1) family. In terms of tissue distribution, widely expressed. The highest expression is found in adrenal gland, and to a lower extent in liver, skeletal muscle and kidney. In testis, primarily localized throughout the adluminal compartment of the seminiferous tubules with expression at the peritubular myoid cells and Leydig cells.

The protein resides in the cell membrane. Its subcellular location is the apical cell membrane. The catalysed reaction is thiamine(out) + H(+)(in) = thiamine(in) + H(+)(out). It carries out the reaction estrone 3-sulfate(in) + H(+)(out) = estrone 3-sulfate(out) + H(+)(in). It catalyses the reaction creatinine(in) + H(+)(out) = creatinine(out) + H(+)(in). The enzyme catalyses agmatine(in) + H(+)(out) = agmatine(out) + H(+)(in). Its function is as follows. Multidrug efflux pump that functions as a H(+)/organic cation antiporter. Plays a physiological role in the excretion of cationic compounds including endogenous metabolites, drugs, toxins through the kidney and liver, into urine and bile respectively. Mediates the efflux of endogenous compounds such as creatinine, vitamin B1/thiamine, agmatine and estrone-3-sulfate. May also contribute to regulate the transport of cationic compounds in testis across the blood-testis-barrier. The polypeptide is Multidrug and toxin extrusion protein 1 (Homo sapiens (Human)).